A 93-amino-acid chain; its full sequence is N-acetyl-S-hydroxy-L-cysteine reductase (93 aa).

The Glutaredoxin domain maps to 1-93; sequence MSDVVNIVVW…NHAQIKEAKR (93 aa). Residues Cys-15 and Cys-18 are joined by a disulfide bond.

Belongs to the glutaredoxin family.

It carries out the reaction N-acetyl-S-hydroxy-L-cysteine + AH2 = N-acetyl-L-cysteine + A + H2O. Its pathway is amino-acid metabolism. In terms of biological role, involved in a cysteine salvage pathway from S-alkylcysteine. Catalyzes the reduction of N-acetyl-S-hydroxy-L-cysteine (N-acetyl-L-cysteine sulfenic acid) to N-acetyl-L-cysteine. This pathway is likely important in the catabolism of alkylated cysteine generated by proteolysis of alkylated glutathione formed in the detoxification of a wide range of electrophiles. This is N-acetyl-S-hydroxy-L-cysteine reductase from Bacillus subtilis (strain 168).